We begin with the raw amino-acid sequence, 540 residues long: UDP-N-acetylmuramyl-tripeptide synthetase (540 aa).

Position 33 (Ser33) interacts with UDP-N-acetyl-alpha-D-muramoyl-L-alanyl-D-glutamate. Residue 114 to 120 coordinates ATP; it reads GTEGKSS. Residues 158 to 159, Ser185, and Arg195 contribute to the UDP-N-acetyl-alpha-D-muramoyl-L-alanyl-D-glutamate site; that span reads TT. Lys227 carries the post-translational modification N6-carboxylysine.

This sequence belongs to the MurCDEF family. MurE subfamily. In terms of processing, carboxylation is probably crucial for Mg(2+) binding and, consequently, for the gamma-phosphate positioning of ATP.

It localises to the cytoplasm. It functions in the pathway cell wall biogenesis; peptidoglycan biosynthesis. Functionally, catalyzes the addition of an amino acid to the nucleotide precursor UDP-N-acetylmuramoyl-L-alanyl-D-glutamate (UMAG) in the biosynthesis of bacterial cell-wall peptidoglycan. The chain is UDP-N-acetylmuramyl-tripeptide synthetase from Treponema pallidum (strain Nichols).